We begin with the raw amino-acid sequence, 700 residues long: Polyribonucleotide nucleotidyltransferase (700 aa).

Positions 486 and 492 each coordinate Mg(2+). A KH domain is found at 554-613 (PKIISTTINPDKIREVIGPGGKMINKIIDETGVKIDINDDGRVYIFSSDIQAGKRARSMI). In terms of domain architecture, S1 motif spans 623–691 (GQVFLGRVIR…KQGRVNLSRK (69 aa)).

It belongs to the polyribonucleotide nucleotidyltransferase family. The cofactor is Mg(2+).

Its subcellular location is the cytoplasm. It catalyses the reaction RNA(n+1) + phosphate = RNA(n) + a ribonucleoside 5'-diphosphate. Its function is as follows. Involved in mRNA degradation. Catalyzes the phosphorolysis of single-stranded polyribonucleotides processively in the 3'- to 5'-direction. This Acetivibrio thermocellus (strain ATCC 27405 / DSM 1237 / JCM 9322 / NBRC 103400 / NCIMB 10682 / NRRL B-4536 / VPI 7372) (Clostridium thermocellum) protein is Polyribonucleotide nucleotidyltransferase.